The sequence spans 103 residues: Truncated secreted TNF-receptor-like protein A53 (103 aa).

The TNFR-Cys 1 repeat unit spans residues 36–73 (SCDKGEYLDKRHNQCCNRCPPGEFAKVRCNGNDNTKCE). 3 disulfide bridges follow: Cys-37-Cys-50, Cys-51-Cys-64, and Cys-54-Cys-72. Residues 74–103 (RCPPHTYTTIPIILMDVINVENAQQDHLIR) form a TNFR-Cys 2; truncated repeat.

This sequence belongs to the poxviridae A53R protein family.

The chain is Truncated secreted TNF-receptor-like protein A53 from Vaccinia virus (strain Copenhagen) (VACV).